A 410-amino-acid polypeptide reads, in one-letter code: 3-phenylpropionate/cinnamic acid dioxygenase ferredoxin--NAD(+) reductase component (410 aa).

5-36 (TIIIVGGGQAAAMAAASLRQQGFTGELHLFSD) contacts FAD. 146–184 (SVVIVGAGTIGLELAASATQRSAAQRSAAQRRCKVTVIE) lines the NAD(+) pocket.

This sequence belongs to the bacterial ring-hydroxylating dioxygenase ferredoxin reductase family. As to quaternary structure, this dioxygenase system consists of four proteins: the two subunits of the hydroxylase component (HcaE and HcaF), a ferredoxin (HcaC) and a ferredoxin reductase (HcaD). Requires FAD as cofactor.

It carries out the reaction 2 reduced [2Fe-2S]-[ferredoxin] + NAD(+) + H(+) = 2 oxidized [2Fe-2S]-[ferredoxin] + NADH. It functions in the pathway aromatic compound metabolism; 3-phenylpropanoate degradation. Its function is as follows. Part of the multicomponent 3-phenylpropionate dioxygenase, that converts 3-phenylpropionic acid (PP) and cinnamic acid (CI) into 3-phenylpropionate-dihydrodiol (PP-dihydrodiol) and cinnamic acid-dihydrodiol (CI-dihydrodiol), respectively. The chain is 3-phenylpropionate/cinnamic acid dioxygenase ferredoxin--NAD(+) reductase component from Shigella flexneri serotype 5b (strain 8401).